The primary structure comprises 200 residues: Pyridoxal 5'-phosphate synthase subunit PdxT (200 aa).

52–54 lines the L-glutamine pocket; the sequence is GES. Catalysis depends on Cys-84, which acts as the Nucleophile. L-glutamine-binding positions include Arg-116 and 145-146; that span reads IR. Catalysis depends on charge relay system residues His-181 and Glu-183.

The protein belongs to the glutaminase PdxT/SNO family. In the presence of PdxS, forms a dodecamer of heterodimers. Only shows activity in the heterodimer.

The enzyme catalyses aldehydo-D-ribose 5-phosphate + D-glyceraldehyde 3-phosphate + L-glutamine = pyridoxal 5'-phosphate + L-glutamate + phosphate + 3 H2O + H(+). It catalyses the reaction L-glutamine + H2O = L-glutamate + NH4(+). It participates in cofactor biosynthesis; pyridoxal 5'-phosphate biosynthesis. Functionally, catalyzes the hydrolysis of glutamine to glutamate and ammonia as part of the biosynthesis of pyridoxal 5'-phosphate. The resulting ammonia molecule is channeled to the active site of PdxS. This chain is Pyridoxal 5'-phosphate synthase subunit PdxT, found in Saccharolobus islandicus (strain M.16.27) (Sulfolobus islandicus).